Consider the following 163-residue polypeptide: SKP1-like protein 3 (163 aa).

The segment at Leu105–Glu163 is interaction with the F-box domain of F-box proteins.

Belongs to the SKP1 family. Part of a SCF (SKP1-cullin-F-box) protein ligase complex. Interacts with ADO3/FKF1 and At3g61590. Highly expressed in siliques.

It localises to the nucleus. It participates in protein modification; protein ubiquitination. In terms of biological role, involved in ubiquitination and subsequent proteasomal degradation of target proteins. Together with CUL1, RBX1 and a F-box protein, it forms a SCF E3 ubiquitin ligase complex. The functional specificity of this complex depends on the type of F-box protein. In the SCF complex, it serves as an adapter that links the F-box protein to CUL1. The chain is SKP1-like protein 3 (ASK3) from Arabidopsis thaliana (Mouse-ear cress).